The following is a 496-amino-acid chain: Galactan beta-1,4-galactosyltransferase GALS1 (496 aa).

The helical transmembrane segment at 22–42 (IIATLLALSLVMIVWNLPPYY) threads the bilayer. One can recognise a GT92 domain in the interval 232-464 (DYLYCGSSLY…AKKKVTLYNK (233 aa)).

The protein belongs to the glycosyltransferase 92 family. Expressed in root vasculature, mature leaves, trichomes, flowers, siliques and seeds.

The protein resides in the golgi apparatus membrane. Involved in the biosynthesis of beta-1,4-galactan. Can transfer galactose residues from UDP-galactose to beta-1,4-galactopentaose in vitro. Forms specifically beta-1,4-galactosyl linkages and can add successive beta-1,4-galactosyl residues to the acceptor. Beta-1,4-galactans are abundant polysaccharides in plant cell walls and are found as side-chain of rhamnogalacturonan I, which is a major component of pectin. The sequence is that of Galactan beta-1,4-galactosyltransferase GALS1 from Arabidopsis thaliana (Mouse-ear cress).